Consider the following 562-residue polypeptide: Urocanate hydratase (562 aa).

NAD(+) contacts are provided by residues 52 to 53 (GG), Q130, 176 to 178 (GMG), E196, R201, 242 to 243 (NA), 263 to 267 (QTSAH), 273 to 274 (YL), and Y322. C410 is an active-site residue. An NAD(+)-binding site is contributed by G492.

The protein belongs to the urocanase family. It depends on NAD(+) as a cofactor.

It localises to the cytoplasm. The enzyme catalyses 4-imidazolone-5-propanoate = trans-urocanate + H2O. It participates in amino-acid degradation; L-histidine degradation into L-glutamate; N-formimidoyl-L-glutamate from L-histidine: step 2/3. Catalyzes the conversion of urocanate to 4-imidazolone-5-propionate. The protein is Urocanate hydratase of Shewanella pealeana (strain ATCC 700345 / ANG-SQ1).